A 314-amino-acid chain; its full sequence is Phospholipid phosphatase-related protein type 5 (314 aa).

6 helical membrane passes run F5–A25, I61–G81, F120–V140, A194–A214, V223–Y243, and V250–N270.

Belongs to the PA-phosphatase related phosphoesterase family.

Its subcellular location is the cell membrane. Its function is as follows. Induces filopodia formation and promotes neurite growth. The polypeptide is Phospholipid phosphatase-related protein type 5 (Xenopus laevis (African clawed frog)).